A 78-amino-acid chain; its full sequence is Small acidic protein 2 (78 aa).

In terms of tissue distribution, expressed in siliques and anthers.

Mediates responses to the synthetic auxin 2,4-dichlorophenoxyacetic acid (2,4-D). Not involved in the response to indole-3-acetic acid (IAA). May interact with RUB modification-related components and may regulate the culling-ring ubiquitin E3 ligase complex (CRL) activity. This Arabidopsis thaliana (Mouse-ear cress) protein is Small acidic protein 2 (SMAP2).